Here is a 690-residue protein sequence, read N- to C-terminus: UvrABC system protein B (690 aa).

In terms of domain architecture, Helicase ATP-binding spans 39–422 (EGLDDGLSFQ…EQQHAGQVVE (384 aa)). 52–59 (GVTGSGKT) serves as a coordination point for ATP. The Beta-hairpin motif lies at 105-128 (YYDYYQPEAYVPSRDLFIEKDSSI). One can recognise a Helicase C-terminal domain in the interval 443–596 (QVDDLLAEIG…QIAFNLEHGI (154 aa)). The UVR domain occupies 640–675 (AREIKRLEKSMMECAKNLEFEKAAAARDDLFRLRER).

This sequence belongs to the UvrB family. As to quaternary structure, forms a heterotetramer with UvrA during the search for lesions. Interacts with UvrC in an incision complex.

The protein resides in the cytoplasm. Its function is as follows. The UvrABC repair system catalyzes the recognition and processing of DNA lesions. A damage recognition complex composed of 2 UvrA and 2 UvrB subunits scans DNA for abnormalities. Upon binding of the UvrA(2)B(2) complex to a putative damaged site, the DNA wraps around one UvrB monomer. DNA wrap is dependent on ATP binding by UvrB and probably causes local melting of the DNA helix, facilitating insertion of UvrB beta-hairpin between the DNA strands. Then UvrB probes one DNA strand for the presence of a lesion. If a lesion is found the UvrA subunits dissociate and the UvrB-DNA preincision complex is formed. This complex is subsequently bound by UvrC and the second UvrB is released. If no lesion is found, the DNA wraps around the other UvrB subunit that will check the other stand for damage. The sequence is that of UvrABC system protein B from Dechloromonas aromatica (strain RCB).